The primary structure comprises 273 residues: 4-hydroxy-tetrahydrodipicolinate reductase (273 aa).

Residues 12-17 (GAGGRM) and E38 each bind NAD(+). R39 provides a ligand contact to NADP(+). Residues 102-104 (GTT) and 126-129 (AANF) contribute to the NAD(+) site. The Proton donor/acceptor role is filled by H159. H160 is a binding site for (S)-2,3,4,5-tetrahydrodipicolinate. The active-site Proton donor is the K163. Residue 169-170 (GT) participates in (S)-2,3,4,5-tetrahydrodipicolinate binding.

The protein belongs to the DapB family. As to quaternary structure, homotetramer.

It is found in the cytoplasm. The enzyme catalyses (S)-2,3,4,5-tetrahydrodipicolinate + NAD(+) + H2O = (2S,4S)-4-hydroxy-2,3,4,5-tetrahydrodipicolinate + NADH + H(+). It catalyses the reaction (S)-2,3,4,5-tetrahydrodipicolinate + NADP(+) + H2O = (2S,4S)-4-hydroxy-2,3,4,5-tetrahydrodipicolinate + NADPH + H(+). Its pathway is amino-acid biosynthesis; L-lysine biosynthesis via DAP pathway; (S)-tetrahydrodipicolinate from L-aspartate: step 4/4. Functionally, catalyzes the conversion of 4-hydroxy-tetrahydrodipicolinate (HTPA) to tetrahydrodipicolinate. In Escherichia coli O139:H28 (strain E24377A / ETEC), this protein is 4-hydroxy-tetrahydrodipicolinate reductase.